The chain runs to 93 residues: RNA-binding protein Hfq (93 aa).

In terms of domain architecture, Sm spans 9 to 68 (DPYLNALRRERIPVSIYLVNGIKLQGQIESFDQFVILLKNTVSQMVYKHAISTVVPARAI). Positions 70–81 (HNNNSNHAHQAA) are enriched in low complexity. The interval 70-93 (HNNNSNHAHQAAPVQSAEVVEKVE) is disordered.

The protein belongs to the Hfq family. As to quaternary structure, homohexamer.

RNA chaperone that binds small regulatory RNA (sRNAs) and mRNAs to facilitate mRNA translational regulation in response to envelope stress, environmental stress and changes in metabolite concentrations. Also binds with high specificity to tRNAs. This is RNA-binding protein Hfq from Glaesserella parasuis serovar 5 (strain SH0165) (Haemophilus parasuis).